The primary structure comprises 725 residues: MRFSKLSLAIATTLVTANALAQSVELDSINVIATRDPSRFAYTPEKQSKDSLLSKQATSVAAALEDIPNVDIRGGSRSIAQKPNIRGLSDNRVVQVIDGVRQNFDLAHRGSYFLPMSLIQEIEVIKGPSSSLWGSGALGGVVAMRTPNALDLLKNNDKFGVKIRQGYQTANNLSERDVSVFAANDKFDVLISGFYNNADNLRTGKGNKLNNTAYKQFGGLAKFGWQINDANRVELSHRETRFKQTAPSNNEVENELTNEQITDQIREFHKPNNGSPPKAKPSQEEFYSGVKTRFGSVSYLTDQQIPDQSTVFNYYLTPDNPYLNTHIALYNNKTIEKEQRKVSGVKDQTKLTTRGINLRNSSELSHISFVYGVDYMRDKIRTERGTNNKDAQFRADPYNANSNTTGVYLIAHIPLFGEKLLLSPSVRYDHYDTSSKTVKYKDNHLSPATKLTWIVTNWLDFTAKYNEAFRAPSMQERFVSGSHFGTSILGRNEINKFVANPNLRPETAKNKEITANLHFDSLFKQGDKFKIEATYFRNDVKDFINLKIFNDAKTNTNASASAGAGAGANPNGALLPTKSQYQNITNARLSGIELQAQYQTERLTLFTNYGSTKGKDKDSGEALSNIAASKIGVGVNYALVKDKFTVGATVTHYAAQRRVPKDHSVTYPSYILTDLRATYAPLKGEWKNLRLDFALENLFDRKYQPAFSLMEGTGRNAKISAVYSF.

The signal sequence occupies residues 1 to 21 (MRFSKLSLAIATTLVTANALA). Residues 36-147 (DPSRFAYTPE…LGGVVAMRTP (112 aa)) enclose the TBDR plug domain. Positions 158–725 (KFGVKIRQGY…NAKISAVYSF (568 aa)) constitute a TBDR beta-barrel domain. Positions 708 to 725 (SLMEGTGRNAKISAVYSF) match the TonB C-terminal box motif.

Belongs to the TonB-dependent receptor family.

It is found in the cell outer membrane. Functionally, required for utilization of free heme at low concentrations. This chain is Heme/hemopexin utilization protein C (hxuC), found in Haemophilus influenzae.